We begin with the raw amino-acid sequence, 383 residues long: tRNA-specific 2-thiouridylase MnmA (383 aa).

Residues 9-16 and M35 each bind ATP; that span reads GMSGGVDS. The interaction with target base in tRNA stretch occupies residues 95–97; the sequence is NPD. The active-site Nucleophile is C100. C100 and C196 are oxidised to a cystine. ATP is bound at residue G124. Positions 146–148 are interaction with tRNA; it reads KDQ. Residue C196 is the Cysteine persulfide intermediate of the active site. An interaction with tRNA region spans residues 308–309; the sequence is RY.

It belongs to the MnmA/TRMU family.

The protein resides in the cytoplasm. The catalysed reaction is S-sulfanyl-L-cysteinyl-[protein] + uridine(34) in tRNA + AH2 + ATP = 2-thiouridine(34) in tRNA + L-cysteinyl-[protein] + A + AMP + diphosphate + H(+). In terms of biological role, catalyzes the 2-thiolation of uridine at the wobble position (U34) of tRNA, leading to the formation of s(2)U34. This is tRNA-specific 2-thiouridylase MnmA from Burkholderia pseudomallei (strain 1106a).